A 213-amino-acid polypeptide reads, in one-letter code: Uracil phosphoribosyltransferase (213 aa).

5-phospho-alpha-D-ribose 1-diphosphate-binding positions include Arg78, Arg103, and 131–139 (DPMLATGGT). Residues Ile197 and 202–204 (GDA) each bind uracil. Residue Asp203 participates in 5-phospho-alpha-D-ribose 1-diphosphate binding.

This sequence belongs to the UPRTase family. Mg(2+) serves as cofactor.

The catalysed reaction is UMP + diphosphate = 5-phospho-alpha-D-ribose 1-diphosphate + uracil. The protein operates within pyrimidine metabolism; UMP biosynthesis via salvage pathway; UMP from uracil: step 1/1. Its activity is regulated as follows. Allosterically activated by GTP. In terms of biological role, catalyzes the conversion of uracil and 5-phospho-alpha-D-ribose 1-diphosphate (PRPP) to UMP and diphosphate. The sequence is that of Uracil phosphoribosyltransferase from Bifidobacterium longum subsp. infantis (strain ATCC 15697 / DSM 20088 / JCM 1222 / NCTC 11817 / S12).